The sequence spans 597 residues: Hydrogenase-1 large chain (597 aa).

Residues Cys-76, Cys-79, Cys-576, and Cys-579 each coordinate Ni(2+).

This sequence belongs to the [NiFe]/[NiFeSe] hydrogenase large subunit family. Heterodimer of a large and a small subunit. It depends on Ni(2+) as a cofactor.

The protein resides in the cell membrane. It carries out the reaction H2 + A = AH2. Its function is as follows. This is one of three E.coli hydrogenases synthesized in response to different physiological conditions. HYD1 is believed to have a role in hydrogen cycling during fermentative growth. The protein is Hydrogenase-1 large chain (hyaB) of Escherichia coli (strain K12).